The chain runs to 873 residues: Alanine--tRNA ligase (873 aa).

Zn(2+)-binding residues include His559, His563, Cys661, and His665.

The protein belongs to the class-II aminoacyl-tRNA synthetase family. Requires Zn(2+) as cofactor.

The protein localises to the cytoplasm. The enzyme catalyses tRNA(Ala) + L-alanine + ATP = L-alanyl-tRNA(Ala) + AMP + diphosphate. Functionally, catalyzes the attachment of alanine to tRNA(Ala) in a two-step reaction: alanine is first activated by ATP to form Ala-AMP and then transferred to the acceptor end of tRNA(Ala). Also edits incorrectly charged Ser-tRNA(Ala) and Gly-tRNA(Ala) via its editing domain. In Acaryochloris marina (strain MBIC 11017), this protein is Alanine--tRNA ligase.